We begin with the raw amino-acid sequence, 509 residues long: Bifunctional purine biosynthesis protein PurH (509 aa).

In terms of domain architecture, MGS-like spans 1–146 (MTIQKINRVL…KNWYRVGVCV (146 aa)).

This sequence belongs to the PurH family.

The catalysed reaction is (6R)-10-formyltetrahydrofolate + 5-amino-1-(5-phospho-beta-D-ribosyl)imidazole-4-carboxamide = 5-formamido-1-(5-phospho-D-ribosyl)imidazole-4-carboxamide + (6S)-5,6,7,8-tetrahydrofolate. It carries out the reaction IMP + H2O = 5-formamido-1-(5-phospho-D-ribosyl)imidazole-4-carboxamide. It functions in the pathway purine metabolism; IMP biosynthesis via de novo pathway; 5-formamido-1-(5-phospho-D-ribosyl)imidazole-4-carboxamide from 5-amino-1-(5-phospho-D-ribosyl)imidazole-4-carboxamide (10-formyl THF route): step 1/1. The protein operates within purine metabolism; IMP biosynthesis via de novo pathway; IMP from 5-formamido-1-(5-phospho-D-ribosyl)imidazole-4-carboxamide: step 1/1. The protein is Bifunctional purine biosynthesis protein PurH of Natranaerobius thermophilus (strain ATCC BAA-1301 / DSM 18059 / JW/NM-WN-LF).